We begin with the raw amino-acid sequence, 177 residues long: MSSSTMDNNEPKVLEMVYDSPILPEGSSMDPNIINCINRHINMCLQHTYSSSIIAILDRFLMMNKDELNNTQCHIIKEFMTYEQMAIDHYGGYVNAILYQIRKRPNQHHTIDLFKKIKRTRYDTFKVDPVEFVKKVIGFVSILNKYKPVYSYVLYENVLYDELKCFIDYVETKYFQN.

This sequence belongs to the poxviridae OPG036 family.

Its subcellular location is the host nucleus. In terms of biological role, plays a role in the inhibition of host innate immune response. Within the host nucleus, inhibits activation of interferon-beta promoter by inhibiting IRF3 activation. The sequence is that of Protein OPG036 (OPG036) from Homo sapiens (Human).